The chain runs to 369 residues: Probable dual-specificity RNA methyltransferase RlmN (369 aa).

Glu108 functions as the Proton acceptor in the catalytic mechanism. A Radical SAM core domain is found at 114-352 (YPDRATLCIS…CTVRDTKGQE (239 aa)). An intrachain disulfide couples Cys121 to Cys357. 3 residues coordinate [4Fe-4S] cluster: Cys128, Cys132, and Cys135. S-adenosyl-L-methionine-binding positions include 178–179 (GE), Ser212, 235–237 (SLH), and Asn314. Cys357 functions as the S-methylcysteine intermediate in the catalytic mechanism.

The protein belongs to the radical SAM superfamily. RlmN family. It depends on [4Fe-4S] cluster as a cofactor.

The protein resides in the cytoplasm. It carries out the reaction adenosine(2503) in 23S rRNA + 2 reduced [2Fe-2S]-[ferredoxin] + 2 S-adenosyl-L-methionine = 2-methyladenosine(2503) in 23S rRNA + 5'-deoxyadenosine + L-methionine + 2 oxidized [2Fe-2S]-[ferredoxin] + S-adenosyl-L-homocysteine. It catalyses the reaction adenosine(37) in tRNA + 2 reduced [2Fe-2S]-[ferredoxin] + 2 S-adenosyl-L-methionine = 2-methyladenosine(37) in tRNA + 5'-deoxyadenosine + L-methionine + 2 oxidized [2Fe-2S]-[ferredoxin] + S-adenosyl-L-homocysteine. Functionally, specifically methylates position 2 of adenine 2503 in 23S rRNA and position 2 of adenine 37 in tRNAs. This is Probable dual-specificity RNA methyltransferase RlmN from Corynebacterium efficiens (strain DSM 44549 / YS-314 / AJ 12310 / JCM 11189 / NBRC 100395).